We begin with the raw amino-acid sequence, 281 residues long: ATP phosphoribosyltransferase (281 aa).

The protein belongs to the ATP phosphoribosyltransferase family. Long subfamily. It depends on Mg(2+) as a cofactor.

The protein resides in the cytoplasm. It catalyses the reaction 1-(5-phospho-beta-D-ribosyl)-ATP + diphosphate = 5-phospho-alpha-D-ribose 1-diphosphate + ATP. The protein operates within amino-acid biosynthesis; L-histidine biosynthesis; L-histidine from 5-phospho-alpha-D-ribose 1-diphosphate: step 1/9. Its activity is regulated as follows. Feedback inhibited by histidine. Functionally, catalyzes the condensation of ATP and 5-phosphoribose 1-diphosphate to form N'-(5'-phosphoribosyl)-ATP (PR-ATP). Has a crucial role in the pathway because the rate of histidine biosynthesis seems to be controlled primarily by regulation of HisG enzymatic activity. This is ATP phosphoribosyltransferase (hisG) from Archaeoglobus fulgidus (strain ATCC 49558 / DSM 4304 / JCM 9628 / NBRC 100126 / VC-16).